Reading from the N-terminus, the 394-residue chain is Purine ribonucleoside efflux pump NepI (394 aa).

The Cytoplasmic portion of the chain corresponds to 1 to 21 (MSEFIAENRGADAITRPNWSA). A helical membrane pass occupies residues 22–42 (VFSVAFCVACLIIVEFLPVSL). Over 43 to 54 (LTPMAQDLGISE) the chain is Periplasmic. A helical membrane pass occupies residues 55 to 75 (GVAGQSVTVTAFVAMFASLFI). Residues 76-85 (TQTIQATDRR) lie on the Cytoplasmic side of the membrane. Residues 86-106 (YVVILFAVLLTISCLLVSFAN) form a helical membrane-spanning segment. Ser107 is a topological domain (periplasmic). A helical transmembrane segment spans residues 108 to 128 (FSLLLIGRACLGLALGGFWAM). At 129 to 147 (SASLTMRLVPPRTVPKALS) the chain is on the cytoplasmic side. A helical membrane pass occupies residues 148-168 (VIFGAVSIALVIAAPLGSFLG). Topologically, residues 169–175 (ELIGWRN) are periplasmic. Residues 176-196 (VFNAAAVMGVLCIFWIIKSLP) form a helical membrane-spanning segment. Residues 197–215 (SLPGKPSHQKQNTFRLLQR) lie on the Cytoplasmic side of the membrane. Residues 216-236 (PGVMAGMIAIFMSFAGQFAFF) traverse the membrane as a helical segment. At 237–255 (TYIRPVYMNLAGFGVDGLT) the chain is on the periplasmic side. The chain crosses the membrane as a helical span at residues 256–276 (LVLLSFGIASFIGTSLSSFIL). Residues 277 to 281 (KRSVK) lie on the Cytoplasmic side of the membrane. Residues 282–302 (LALAGAPLILAVSALVLTLCG) form a helical membrane-spanning segment. At 303–305 (SDK) the chain is on the periplasmic side. A helical membrane pass occupies residues 306–326 (IVATGVAIIWGLTFALVPVGW). Residues 327 to 343 (STWSTRSLADQAEKAGS) are Cytoplasmic-facing. The chain crosses the membrane as a helical span at residues 344–364 (IQVAVIQLANTCGAAIGGYAL). At 365-366 (DN) the chain is on the periplasmic side. A helical transmembrane segment spans residues 367 to 387 (IGLTSPLMLSGTLMLLTALLV). The Cytoplasmic portion of the chain corresponds to 388-394 (TAKVKMK).

The protein belongs to the major facilitator superfamily. DHA1 family. NepI (TC 2.A.1.2.26) subfamily.

The protein localises to the cell inner membrane. The enzyme catalyses inosine(in) + H(+)(out) = inosine(out) + H(+)(in). The catalysed reaction is guanosine(in) + H(+)(out) = guanosine(out) + H(+)(in). In terms of biological role, involved in the efflux of purine ribonucleosides, such as inosine and guanosine. This Shigella dysenteriae serotype 1 (strain Sd197) protein is Purine ribonucleoside efflux pump NepI.